Consider the following 556-residue polypeptide: Arginine--tRNA ligase (556 aa).

The 'HIGH' region motif lies at 134–144 (ANPTGPLHIGH).

Belongs to the class-I aminoacyl-tRNA synthetase family. Monomer.

It is found in the cytoplasm. The enzyme catalyses tRNA(Arg) + L-arginine + ATP = L-arginyl-tRNA(Arg) + AMP + diphosphate. The sequence is that of Arginine--tRNA ligase from Micrococcus luteus (strain ATCC 4698 / DSM 20030 / JCM 1464 / CCM 169 / CCUG 5858 / IAM 1056 / NBRC 3333 / NCIMB 9278 / NCTC 2665 / VKM Ac-2230) (Micrococcus lysodeikticus).